Reading from the N-terminus, the 384-residue chain is V-type proton ATPase subunit C 2 (384 aa).

Belongs to the V-ATPase C subunit family. V-ATPase is a heteromultimeric enzyme made up of two complexes: the ATP-hydrolytic V1 complex and the proton translocation V0 complex. The V1 complex consists of three catalytic AB heterodimers that form a heterohexamer, three peripheral stalks each consisting of EG heterodimers, one central rotor including subunits D and F, and the regulatory subunits C and H. The proton translocation complex V0 consists of the proton transport subunit a, a ring of proteolipid subunits c9c'', rotary subunit d, subunits e and f, and the accessory subunits vah-19/Ac45 and vah-20/PRR.

Functionally, subunit of the V1 complex of vacuolar(H+)-ATPase (V-ATPase), a multisubunit enzyme composed of a peripheral complex (V1) that hydrolyzes ATP and a membrane integral complex (V0) that translocates protons. V-ATPase is responsible for acidifying and maintaining the pH of intracellular compartments and in some cell types, is targeted to the plasma membrane, where it is responsible for acidifying the extracellular environment. Subunit C is necessary for the assembly of the catalytic sector of the enzyme and is likely to have a specific function in its catalytic activity. The polypeptide is V-type proton ATPase subunit C 2 (VATC) (Ascidia sydneiensis samea (Vanadium-rich ascidian)).